A 224-amino-acid chain; its full sequence is UPF0758 protein VS_0182 (224 aa).

The segment at 1–21 (MPISKMPVESMPREKLLSRGP) is disordered. The MPN domain occupies 102–224 (ALTSPSHTKL…VISFAERGWI (123 aa)). Zn(2+) contacts are provided by His173, His175, and Asp186. A JAMM motif motif is present at residues 173–186 (HNHPSGVAEPSQAD).

It belongs to the UPF0758 family.

In Vibrio atlanticus (strain LGP32) (Vibrio splendidus (strain Mel32)), this protein is UPF0758 protein VS_0182.